A 753-amino-acid chain; its full sequence is 5-methyltetrahydropteroyltriglutamate--homocysteine methyltransferase (753 aa).

5-methyltetrahydropteroyltri-L-glutamate is bound by residues 17-20 (RELK) and K117. L-homocysteine is bound by residues 431 to 433 (IGS) and E484. L-methionine-binding positions include 431–433 (IGS) and E484. Residues 515–516 (RC) and W561 each bind 5-methyltetrahydropteroyltri-L-glutamate. Residue D599 participates in L-homocysteine binding. Residue D599 participates in L-methionine binding. E605 lines the 5-methyltetrahydropteroyltri-L-glutamate pocket. Residues H641, C643, and E665 each contribute to the Zn(2+) site. Residue H694 is the Proton donor of the active site. C726 is a Zn(2+) binding site.

Belongs to the vitamin-B12 independent methionine synthase family. Zn(2+) serves as cofactor.

The catalysed reaction is 5-methyltetrahydropteroyltri-L-glutamate + L-homocysteine = tetrahydropteroyltri-L-glutamate + L-methionine. It participates in amino-acid biosynthesis; L-methionine biosynthesis via de novo pathway; L-methionine from L-homocysteine (MetE route): step 1/1. Functionally, catalyzes the transfer of a methyl group from 5-methyltetrahydrofolate to homocysteine resulting in methionine formation. The protein is 5-methyltetrahydropteroyltriglutamate--homocysteine methyltransferase of Escherichia coli (strain UTI89 / UPEC).